The primary structure comprises 37 residues: Large ribosomal subunit protein bL36 (37 aa).

The protein belongs to the bacterial ribosomal protein bL36 family.

The chain is Large ribosomal subunit protein bL36 from Gloeothece citriformis (strain PCC 7424) (Cyanothece sp. (strain PCC 7424)).